The primary structure comprises 873 residues: Protein SEY1 (873 aa).

Over 1-750 (MVANGHFFAG…KRSAIGGITQ (750 aa)) the chain is Cytoplasmic. One can recognise a GB1/RHD3-type G domain in the interval 50–308 (GFNYHLISVF…IPADGFAVYA (259 aa)). 60–67 (GSQSTGKS) contacts GTP. Positions 677–701 (LDKWIGHTPSSATPADEEDLTPIGG) are disordered. Positions 691–701 (ADEEDLTPIGG) are enriched in acidic residues. A helical membrane pass occupies residues 751-771 (VPLYFYGLLLALGWNEIVAVL). The Lumenal portion of the chain corresponds to 772 to 774 (RNP). A helical membrane pass occupies residues 775-795 (AYFLLLFVCAVTAYVTYQLNL). Residues 796 to 873 (WGPIIKMTEA…IDDADDDDDF (78 aa)) lie on the Cytoplasmic side of the membrane. The disordered stretch occupies residues 841 to 873 (EGYDMSNMKNRKSAGGYQNNRSHIDDADDDDDF).

It belongs to the TRAFAC class dynamin-like GTPase superfamily. GB1/RHD3 GTPase family. RHD3 subfamily.

It localises to the endoplasmic reticulum membrane. Its function is as follows. Cooperates with the reticulon proteins and tubule-shaping DP1 family proteins to generate and maintain the structure of the tubular endoplasmic reticulum network. Has GTPase activity, which is required for its function in ER organization. The protein is Protein SEY1 of Paracoccidioides lutzii (strain ATCC MYA-826 / Pb01) (Paracoccidioides brasiliensis).